A 109-amino-acid polypeptide reads, in one-letter code: DNA-binding protein MJ0691 (109 aa).

It belongs to the PDCD5 family.

This is DNA-binding protein MJ0691 from Methanocaldococcus jannaschii (strain ATCC 43067 / DSM 2661 / JAL-1 / JCM 10045 / NBRC 100440) (Methanococcus jannaschii).